The chain runs to 953 residues: Translation initiation factor IF-2 (953 aa).

Disordered stretches follow at residues 48-240 (SSFS…AQQE) and 279-363 (TKLK…TERK). Composition is skewed to basic and acidic residues over residues 80-89 (TGSEHVEKTQ), 98-111 (FKAE…EQAA), and 140-188 (QGDK…ENHK). Residues 191–207 (RFTNQKKQGRQEPQSKS) are compositionally biased toward polar residues. The span at 229-240 (RQSETRFRAQQE) shows a compositional bias: basic and acidic residues. Over residues 282 to 291 (KSSNISAKST) the composition is skewed to polar residues. The span at 300 to 317 (ARPEKNRELTHHSQEGQK) shows a compositional bias: basic and acidic residues. Over residues 322–338 (SWNSQNQVRNQKNSNWN) the composition is skewed to low complexity. The segment covering 339–348 (KNKKTKKGKN) has biased composition (basic residues). The 170-residue stretch at 454–623 (ERAPVVTIMG…LLVAEVEELK (170 aa)) folds into the tr-type G domain. The interval 463–470 (GHVDHGKT) is G1. 463-470 (GHVDHGKT) is a binding site for GTP. The segment at 488-492 (GITQH) is G2. Residues 509–512 (DTPG) are G3. Residues 509 to 513 (DTPGH) and 563 to 566 (NKID) contribute to the GTP site. Positions 563 to 566 (NKID) are G4. Residues 599 to 601 (SAK) form a G5 region.

Belongs to the TRAFAC class translation factor GTPase superfamily. Classic translation factor GTPase family. IF-2 subfamily.

The protein resides in the cytoplasm. One of the essential components for the initiation of protein synthesis. Protects formylmethionyl-tRNA from spontaneous hydrolysis and promotes its binding to the 30S ribosomal subunits. Also involved in the hydrolysis of GTP during the formation of the 70S ribosomal complex. In Streptococcus pyogenes serotype M1, this protein is Translation initiation factor IF-2.